Here is a 177-residue protein sequence, read N- to C-terminus: Chorismate pyruvate-lyase (177 aa).

Residues methionine 36, arginine 78, leucine 116, and glutamate 157 each coordinate substrate.

This sequence belongs to the UbiC family. In terms of assembly, monomer.

It is found in the cytoplasm. The enzyme catalyses chorismate = 4-hydroxybenzoate + pyruvate. Its pathway is cofactor biosynthesis; ubiquinone biosynthesis. In terms of biological role, removes the pyruvyl group from chorismate, with concomitant aromatization of the ring, to provide 4-hydroxybenzoate (4HB) for the ubiquinone pathway. In Pectobacterium carotovorum subsp. carotovorum (strain PC1), this protein is Chorismate pyruvate-lyase.